The chain runs to 338 residues: Aspartate carbamoyltransferase catalytic subunit (338 aa).

Carbamoyl phosphate contacts are provided by arginine 72 and threonine 73. Lysine 100 serves as a coordination point for L-aspartate. The carbamoyl phosphate site is built by arginine 122, histidine 152, and glutamine 155. Positions 186 and 243 each coordinate L-aspartate. 2 residues coordinate carbamoyl phosphate: glycine 284 and proline 285.

This sequence belongs to the aspartate/ornithine carbamoyltransferase superfamily. ATCase family. Heterododecamer (2C3:3R2) of six catalytic PyrB chains organized as two trimers (C3), and six regulatory PyrI chains organized as three dimers (R2).

The enzyme catalyses carbamoyl phosphate + L-aspartate = N-carbamoyl-L-aspartate + phosphate + H(+). Its pathway is pyrimidine metabolism; UMP biosynthesis via de novo pathway; (S)-dihydroorotate from bicarbonate: step 2/3. Its function is as follows. Catalyzes the condensation of carbamoyl phosphate and aspartate to form carbamoyl aspartate and inorganic phosphate, the committed step in the de novo pyrimidine nucleotide biosynthesis pathway. The sequence is that of Aspartate carbamoyltransferase catalytic subunit from Acinetobacter baumannii (strain SDF).